Consider the following 131-residue polypeptide: Profilin-4 (131 aa).

An intrachain disulfide couples cysteine 13 to cysteine 115. The Involved in PIP2 interaction signature appears at 81-97 (AVIRGKKGAGGITVKKT). Threonine 111 carries the phosphothreonine modification.

This sequence belongs to the profilin family. Occurs in many kinds of cells as a complex with monomeric actin in a 1:1 ratio. In terms of processing, phosphorylated by MAP kinases.

The protein localises to the cytoplasm. It is found in the cytoskeleton. Functionally, binds to actin and affects the structure of the cytoskeleton. At high concentrations, profilin prevents the polymerization of actin, whereas it enhances it at low concentrations. The sequence is that of Profilin-4 from Olea europaea (Common olive).